The sequence spans 573 residues: MTEKSPKPHKRSDAITEGPNRAPARAMLRAAGFTPEDLRKPIIGIANTWIEIGPCNLHLRELAEHIKQGVREAGGTPMEFNTVSISDGITMGSEGMKASLVSREVIADSIELVARGNLFDGLIALSGCDKTIPGTIMALERLDIPGLMLYGGSIAPGKFHAQKVTIQDVFEAVGTHARGKMSDADLEELEHNACPGAGACGGQFTANTMSMCGEFLGISPMGANSVPAMTVEKQQVARRCGHLVMELVRRDIRPSQIITRKAIENAIASVAASGGSTNAVLHLLAIAHEMDVELNIEDFDKISSRTPLLCELKPAGRFTATDLHDAGGIPLVAQRLLEANLLHADALTVTGKTIAEEAKQAKETPGQEVVRPLTDPIKATGGLMILKGNLASEGCVVKLVGHKKLFFEGPARVFESEEEAFAGVEDRTIQAGEVVVVRYEGPKGGPGMREMLGVTAAIAGTELAETVALITDGRFSGATRGLSVGHVAPEAANGGAIAVVRNGDIITLDVERRELRVHLTDAELEARLRNWRAPEPRYKRGVFAKYASTVSSASFGAVTGSTIENKTLAGSTK.

Basic and acidic residues predominate over residues 1-14; that stretch reads MTEKSPKPHKRSDA. Positions 1–21 are disordered; the sequence is MTEKSPKPHKRSDAITEGPNR. Cysteine 55 contacts [2Fe-2S] cluster. Aspartate 87 serves as a coordination point for Mg(2+). Position 128 (cysteine 128) interacts with [2Fe-2S] cluster. Positions 129 and 130 each coordinate Mg(2+). Position 130 is an N6-carboxylysine (lysine 130). Cysteine 200 contacts [2Fe-2S] cluster. Glutamate 450 provides a ligand contact to Mg(2+). Serine 476 (proton acceptor) is an active-site residue.

The protein belongs to the IlvD/Edd family. As to quaternary structure, homodimer. The cofactor is [2Fe-2S] cluster. Mg(2+) is required as a cofactor.

The catalysed reaction is (2R)-2,3-dihydroxy-3-methylbutanoate = 3-methyl-2-oxobutanoate + H2O. It catalyses the reaction (2R,3R)-2,3-dihydroxy-3-methylpentanoate = (S)-3-methyl-2-oxopentanoate + H2O. It functions in the pathway amino-acid biosynthesis; L-isoleucine biosynthesis; L-isoleucine from 2-oxobutanoate: step 3/4. It participates in amino-acid biosynthesis; L-valine biosynthesis; L-valine from pyruvate: step 3/4. In terms of biological role, functions in the biosynthesis of branched-chain amino acids. Catalyzes the dehydration of (2R,3R)-2,3-dihydroxy-3-methylpentanoate (2,3-dihydroxy-3-methylvalerate) into 2-oxo-3-methylpentanoate (2-oxo-3-methylvalerate) and of (2R)-2,3-dihydroxy-3-methylbutanoate (2,3-dihydroxyisovalerate) into 2-oxo-3-methylbutanoate (2-oxoisovalerate), the penultimate precursor to L-isoleucine and L-valine, respectively. The polypeptide is Dihydroxy-acid dehydratase (Koribacter versatilis (strain Ellin345)).